We begin with the raw amino-acid sequence, 408 residues long: 3-ketoacyl-CoA thiolase B, peroxisomal (408 aa).

The active-site Acyl-thioester intermediate is Cys-112. Active-site proton acceptor residues include His-366 and Cys-394.

Belongs to the thiolase-like superfamily. Thiolase family. As to quaternary structure, homodimer.

The protein localises to the peroxisome. It carries out the reaction an acyl-CoA + acetyl-CoA = a 3-oxoacyl-CoA + CoA. It participates in lipid metabolism; fatty acid metabolism. The polypeptide is 3-ketoacyl-CoA thiolase B, peroxisomal (Candida tropicalis (Yeast)).